A 424-amino-acid polypeptide reads, in one-letter code: MRPLFVRRARQLVTLAGSSAAPLVKEKMSDLGIIENGSVWIENGTIVAVGPDDELVRRFADRLAEAEVIDAKGKTVTPGLIDPHTHLVYAGSREHEWTMRLHGATYMEIMNAGGGIHATTKATREASEEALYEESKRRLDQFLLHGVTTVEAKSGYGLSLEHEIKQLEIAKRLHDTHPVDIVSTFLGAHAVPPEWKHDPDEYVRLVIDEMIPEVSRRGLAEFNDVFCERGVFTPDQARRMLEAGKASGLTPKIHADEIEPYGGAELAAEVGAISADHLLRASDEGIRRMADGGVIGVLLPGTAFFLMTKAADARRLIDAGVPVALATDCNPGSSPTVSLPLVMSLACLHMGMTPAEAMAAATINAAHAIGRAHLVGSLEPGKKADLVIFNVPNYMQIMYYYGVNHAETVIKGGKVVVNDGKVYI.

Positions 84 and 86 each coordinate Fe(3+). Zn(2+) contacts are provided by H84 and H86. 3 residues coordinate 4-imidazolone-5-propanoate: R93, Y156, and H189. Y156 lines the N-formimidoyl-L-glutamate pocket. H254 provides a ligand contact to Fe(3+). H254 serves as a coordination point for Zn(2+). E257 provides a ligand contact to 4-imidazolone-5-propanoate. Position 328 (D328) interacts with Fe(3+). A Zn(2+)-binding site is contributed by D328. N330 and G332 together coordinate N-formimidoyl-L-glutamate. A 4-imidazolone-5-propanoate-binding site is contributed by S333.

The protein belongs to the metallo-dependent hydrolases superfamily. HutI family. Zn(2+) is required as a cofactor. The cofactor is Fe(3+).

The protein localises to the cytoplasm. It catalyses the reaction 4-imidazolone-5-propanoate + H2O = N-formimidoyl-L-glutamate. It functions in the pathway amino-acid degradation; L-histidine degradation into L-glutamate; N-formimidoyl-L-glutamate from L-histidine: step 3/3. In terms of biological role, catalyzes the hydrolytic cleavage of the carbon-nitrogen bond in imidazolone-5-propanoate to yield N-formimidoyl-L-glutamate. It is the third step in the universal histidine degradation pathway. This Geobacillus kaustophilus (strain HTA426) protein is Imidazolonepropionase.